A 215-amino-acid chain; its full sequence is Adenylate kinase (215 aa).

An ATP-binding site is contributed by 10–15 (GAGKGT). Positions 30–59 (STGDMLREAVAAGTELGKKVKEIIEKGLLV) are NMP. Residues threonine 31, arginine 36, 57-59 (LLV), 85-88 (GFPR), and glutamine 92 contribute to the AMP site. The interval 126–163 (SRRVCPSCGKVYNLLTIKPKNDMLCDDCNIGLIQREDD) is LID. Position 127 (arginine 127) interacts with ATP. 2 residues coordinate Zn(2+): cysteine 130 and cysteine 133. 136–137 (VY) lines the ATP pocket. Zn(2+) is bound by residues cysteine 150 and cysteine 153. The AMP site is built by arginine 160 and arginine 171. Leucine 199 serves as a coordination point for ATP.

The protein belongs to the adenylate kinase family. As to quaternary structure, monomer.

Its subcellular location is the cytoplasm. The enzyme catalyses AMP + ATP = 2 ADP. Its pathway is purine metabolism; AMP biosynthesis via salvage pathway; AMP from ADP: step 1/1. Its function is as follows. Catalyzes the reversible transfer of the terminal phosphate group between ATP and AMP. Plays an important role in cellular energy homeostasis and in adenine nucleotide metabolism. In Kosmotoga olearia (strain ATCC BAA-1733 / DSM 21960 / TBF 19.5.1), this protein is Adenylate kinase.